A 760-amino-acid chain; its full sequence is ATP-dependent zinc metalloprotease FtsH (760 aa).

Over methionine 1–asparagine 5 the chain is Cytoplasmic. The helical transmembrane segment at valine 6 to phenylalanine 26 threads the bilayer. The Extracellular portion of the chain corresponds to serine 27 to serine 110. Residues isoleucine 111–methionine 131 traverse the membrane as a helical segment. At phenylalanine 132–glycine 760 the chain is on the cytoplasmic side. Glycine 203–threonine 210 is an ATP binding site. Zn(2+) is bound at residue histidine 425. Glutamate 426 is an active-site residue. Zn(2+) contacts are provided by histidine 429 and aspartate 501. The interval aspartate 616–glycine 760 is disordered. Residues alanine 650–alanine 669 show a composition bias toward low complexity. A compositionally biased stretch (acidic residues) spans glycine 740 to aspartate 750.

The protein in the central section; belongs to the AAA ATPase family. This sequence in the C-terminal section; belongs to the peptidase M41 family. As to quaternary structure, homohexamer. It depends on Zn(2+) as a cofactor.

It localises to the cell membrane. Functionally, acts as a processive, ATP-dependent zinc metallopeptidase for both cytoplasmic and membrane proteins. Plays a role in the quality control of integral membrane proteins. In Mycobacterium bovis (strain ATCC BAA-935 / AF2122/97), this protein is ATP-dependent zinc metalloprotease FtsH.